The sequence spans 84 residues: U4-theraphotoxin-Hhn1a (84 aa).

Positions 1-22 (MKVTLIAILTRAAVLVLHTTAA) are cleaved as a signal peptide. Residues 23–47 (EELEESQLMEVSMPDTELAAVDEER) constitute a propeptide that is removed on maturation. 3 disulfides stabilise this stretch: Cys51/Cys65, Cys55/Cys76, and Cys70/Cys81.

It belongs to the neurotoxin 12 (Hwtx-2) family. 02 (Hwtx-2) subfamily. Expressed by the venom gland.

It is found in the secreted. Postsynaptic neurotoxin. The protein is U4-theraphotoxin-Hhn1a of Cyriopagopus hainanus (Chinese bird spider).